The primary structure comprises 120 residues: MKTIIVFLSLLVLATKFGDAKEGVNQEQKKEVTQNEFRVEYLNEMAAMSLLQQLEAXESALFEKEAGRNSRQXRCAMGDVPCTKGKTNCCKGYECKPKSPSWWYDTDFCQPIHGGRPIGI.

The first 20 residues, 1-20 (MKTIIVFLSLLVLATKFGDA), serve as a signal peptide directing secretion. Disulfide bonds link Cys-75–Cys-90, Cys-82–Cys-95, and Cys-89–Cys-109.

It belongs to the neurotoxin 14 (magi-1) family. 05 (ICK-7) subfamily. ICK-7 sub-subfamily. As to expression, expressed by the venom gland.

Its subcellular location is the secreted. Its function is as follows. Ion channel inhibitor. The protein is U13-barytoxin-Tl1a of Trittame loki (Brush-footed trapdoor spider).